We begin with the raw amino-acid sequence, 322 residues long: tRNA-modifying protein YgfZ (322 aa).

Tryptophan 182 is a binding site for folate.

It belongs to the tRNA-modifying YgfZ family.

Its subcellular location is the cytoplasm. Its function is as follows. Folate-binding protein involved in regulating the level of ATP-DnaA and in the modification of some tRNAs. It is probably a key factor in regulatory networks that act via tRNA modification, such as initiation of chromosomal replication. In Vibrio campbellii (strain ATCC BAA-1116), this protein is tRNA-modifying protein YgfZ.